Consider the following 369-residue polypeptide: MAKDEKKAALEAALKKIEKNFGKGAVMRMGEKVDTQISTVPSGSLALDAALGVGGYPRGRIVEIYGPESSGKTTVALHAVAEVQKRGGTAAYIDAENAMDPAYAEALGVDIDQLILSQPNTGEEGLQIADTLISSGAIDIVVVDSVAALVPRAEIEGEMGDSHVGLQARLMSQALRKLSGTIAKTKTIAIFINQIREKVGVMFGNPETTPGGRALKFYSTIRLEVRRAEQIKQSTNVIGNRVKIKVVKNKVAPPFKVAEVDIMYGQGISQSGELLDMAADQDIVDKAGAWYSYHGEKIGQGRENAKKYLEEHPDVSEDIQTQVRKAYGIDAESLEEKEDPEKVKEQRAKKAAPGEEKPAEPASPEKTDK.

Residue 66–73 (GPESSGKT) coordinates ATP. The disordered stretch occupies residues 328–369 (GIDAESLEEKEDPEKVKEQRAKKAAPGEEKPAEPASPEKTDK). The span at 339–369 (DPEKVKEQRAKKAAPGEEKPAEPASPEKTDK) shows a compositional bias: basic and acidic residues.

The protein belongs to the RecA family.

The protein localises to the cytoplasm. Its function is as follows. Can catalyze the hydrolysis of ATP in the presence of single-stranded DNA, the ATP-dependent uptake of single-stranded DNA by duplex DNA, and the ATP-dependent hybridization of homologous single-stranded DNAs. It interacts with LexA causing its activation and leading to its autocatalytic cleavage. The polypeptide is Protein RecA (Lactobacillus delbrueckii subsp. bulgaricus (strain ATCC BAA-365 / Lb-18)).